The sequence spans 445 residues: Exodeoxyribonuclease 7 large subunit (445 aa).

This sequence belongs to the XseA family. Heterooligomer composed of large and small subunits.

It is found in the cytoplasm. The catalysed reaction is Exonucleolytic cleavage in either 5'- to 3'- or 3'- to 5'-direction to yield nucleoside 5'-phosphates.. Functionally, bidirectionally degrades single-stranded DNA into large acid-insoluble oligonucleotides, which are then degraded further into small acid-soluble oligonucleotides. The polypeptide is Exodeoxyribonuclease 7 large subunit (Shewanella pealeana (strain ATCC 700345 / ANG-SQ1)).